The following is a 421-amino-acid chain: Signal recognition particle receptor FtsY (421 aa).

Positions 1 to 10 (MFSFFRRKKK) are enriched in basic residues. The tract at residues 1-31 (MFSFFRRKKKQETPALEEAQIQETAAKAESE) is disordered. Residues 228 to 235 (GINGAGKT), 309 to 313 (DTAGR), and 373 to 376 (TKLD) each bind GTP.

This sequence belongs to the GTP-binding SRP family. FtsY subfamily. In terms of assembly, part of the signal recognition particle protein translocation system, which is composed of SRP and FtsY. SRP is a ribonucleoprotein composed of Ffh and a 4.5S RNA molecule.

The protein localises to the cell inner membrane. Its subcellular location is the cytoplasm. The catalysed reaction is GTP + H2O = GDP + phosphate + H(+). In terms of biological role, involved in targeting and insertion of nascent membrane proteins into the cytoplasmic membrane. Acts as a receptor for the complex formed by the signal recognition particle (SRP) and the ribosome-nascent chain (RNC). Interaction with SRP-RNC leads to the transfer of the RNC complex to the Sec translocase for insertion into the membrane, the hydrolysis of GTP by both Ffh and FtsY, and the dissociation of the SRP-FtsY complex into the individual components. The protein is Signal recognition particle receptor FtsY of Neisseria meningitidis serogroup A / serotype 4A (strain DSM 15465 / Z2491).